The chain runs to 255 residues: tRNA pseudouridine synthase A (255 aa).

Catalysis depends on Asp-52, which acts as the Nucleophile. Residue Tyr-111 participates in substrate binding.

This sequence belongs to the tRNA pseudouridine synthase TruA family. Homodimer.

It catalyses the reaction uridine(38/39/40) in tRNA = pseudouridine(38/39/40) in tRNA. Functionally, formation of pseudouridine at positions 38, 39 and 40 in the anticodon stem and loop of transfer RNAs. This Cereibacter sphaeroides (strain ATCC 17023 / DSM 158 / JCM 6121 / CCUG 31486 / LMG 2827 / NBRC 12203 / NCIMB 8253 / ATH 2.4.1.) (Rhodobacter sphaeroides) protein is tRNA pseudouridine synthase A.